Reading from the N-terminus, the 152-residue chain is Large-conductance mechanosensitive channel (152 aa).

A run of 3 helical transmembrane segments spans residues 14–34 (VVDM…VKSL), 39–59 (LMPG…FLVI), and 85–105 (GLFI…FLVI).

It belongs to the MscL family. In terms of assembly, homopentamer.

It localises to the cell inner membrane. Functionally, channel that opens in response to stretch forces in the membrane lipid bilayer. May participate in the regulation of osmotic pressure changes within the cell. This Syntrophus aciditrophicus (strain SB) protein is Large-conductance mechanosensitive channel.